The chain runs to 135 residues: Succinate dehydrogenase assembly factor 3, mitochondrial (135 aa).

A mitochondrion-targeting transit peptide spans 1–12 (MRIFTRLLYAAP).

This sequence belongs to the complex I LYR family. SDHAF3 subfamily. In terms of assembly, interacts with the iron-sulfur protein subunit within the SDH catalytic dimer.

Its subcellular location is the mitochondrion matrix. In terms of biological role, plays an essential role in the assembly of succinate dehydrogenase (SDH), an enzyme complex (also referred to as respiratory complex II) that is a component of both the tricarboxylic acid (TCA) cycle and the mitochondrial electron transport chain, and which couples the oxidation of succinate to fumarate with the reduction of ubiquinone (coenzyme Q) to ubiquinol. Promotes maturation of the iron-sulfur protein subunit of the SDH catalytic dimer, protecting it from the deleterious effects of oxidants. May act together with SDHAF1. The protein is Succinate dehydrogenase assembly factor 3, mitochondrial of Emericella nidulans (strain FGSC A4 / ATCC 38163 / CBS 112.46 / NRRL 194 / M139) (Aspergillus nidulans).